Consider the following 619-residue polypeptide: Dihydroxy-acid dehydratase (619 aa).

Residue Asp-81 coordinates Mg(2+). Cys-122 contacts [2Fe-2S] cluster. Residues Asp-123 and Lys-124 each contribute to the Mg(2+) site. Lys-124 bears the N6-carboxylysine mark. Residue Cys-195 coordinates [2Fe-2S] cluster. Glu-494 contributes to the Mg(2+) binding site. Ser-520 functions as the Proton acceptor in the catalytic mechanism.

The protein belongs to the IlvD/Edd family. Homodimer. [2Fe-2S] cluster serves as cofactor. The cofactor is Mg(2+).

It catalyses the reaction (2R)-2,3-dihydroxy-3-methylbutanoate = 3-methyl-2-oxobutanoate + H2O. The enzyme catalyses (2R,3R)-2,3-dihydroxy-3-methylpentanoate = (S)-3-methyl-2-oxopentanoate + H2O. It participates in amino-acid biosynthesis; L-isoleucine biosynthesis; L-isoleucine from 2-oxobutanoate: step 3/4. The protein operates within amino-acid biosynthesis; L-valine biosynthesis; L-valine from pyruvate: step 3/4. Its function is as follows. Functions in the biosynthesis of branched-chain amino acids. Catalyzes the dehydration of (2R,3R)-2,3-dihydroxy-3-methylpentanoate (2,3-dihydroxy-3-methylvalerate) into 2-oxo-3-methylpentanoate (2-oxo-3-methylvalerate) and of (2R)-2,3-dihydroxy-3-methylbutanoate (2,3-dihydroxyisovalerate) into 2-oxo-3-methylbutanoate (2-oxoisovalerate), the penultimate precursor to L-isoleucine and L-valine, respectively. This Shewanella putrefaciens (strain CN-32 / ATCC BAA-453) protein is Dihydroxy-acid dehydratase.